Consider the following 711-residue polypeptide: Hydroperoxide isomerase ALOXE3 (711 aa).

The 118-residue stretch at 2–119 folds into the PLAT domain; it reads AVYRLCVTTG…TVELRPGTAR (118 aa). Residues 120–711 enclose the Lipoxygenase domain; it reads TICQDSLPLL…PPLIENSVSI (592 aa). His408, His413, His588, Asn592, and Ile711 together coordinate Fe cation.

Belongs to the lipoxygenase family. Fe cation serves as cofactor. As to expression, predominantly expressed in skin.

Its subcellular location is the cytoplasm. It carries out the reaction a hydroperoxyeicosatetraenoate = a hydroxy-epoxy-eicosatetraenoate. The catalysed reaction is (12R)-hydroperoxy-(5Z,8Z,10E,14Z)-eicosatetraenoate = (8R)-hydroxy-(11R,12R)-epoxy-(5Z,9E,14Z)-eicosatrienoate. The enzyme catalyses (12S)-hydroperoxy-(5Z,8Z,10E,14Z)-eicosatetraenoate = (8R)-hydroxy-(11S,12S)-epoxy-(5Z,9E,14Z)-eicosatrienoate. It catalyses the reaction (12S)-hydroperoxy-(5Z,8Z,10E,14Z)-eicosatetraenoate = (10R)-hydroxy-(11S,12S)-epoxy-(5Z,8Z,14Z)-eicosatrienoate. It carries out the reaction (15S)-hydroperoxy-(5Z,8Z,11Z,13E)-eicosatetraenoate = (13R)-hydroxy-(14S,15S)-epoxy-(5Z,8Z,11Z)-eicosatrienoate. The catalysed reaction is (5S)-hydroperoxy-(6E,8Z,11Z,14Z)-eicosatetraenoate = 7R-hydroxy-5S,6S-epoxy-(8Z,11Z,14Z)-eicosatrienoate. The enzyme catalyses (13S)-hydroperoxy-(9Z,11E)-octadecadienoate = 11-hydroxy-(12S,13S)-epoxy-(9Z)-octadecenoate. It catalyses the reaction N-[omega-(9R)-hydroperoxy-(10E,12Z)-octadecadienoyloxy]acyl-beta-D-glucosyl-(1&lt;-&gt;1)-octadecasphing-4E-enine = a N-[omega-(9R,10R)-epoxy-(13R)-hydroxy-(11E)-octadecenoyloxy]acyl-beta-D-glucosyl-(1&lt;-&gt;1)-sphing-4E-enine. It carries out the reaction a N-[omega-(9R)-hydroperoxy-(10E,12Z)-octadecadienoyloxy]-acylsphin-4E-enine = a N-[omega-(9R,10R)-epoxy-(13R)-hydroxy-(11E)-octadecenoyloxy]-acylsphing-4E-enine. The catalysed reaction is a hydroperoxyeicosatetraenoate = an oxoeicosatetraenoate + H2O. The enzyme catalyses (12R)-hydroperoxy-(5Z,8Z,10E,14Z)-eicosatetraenoate = 12-oxo-(5Z,8Z,10E,14Z)-eicosatetraenoate + H2O. It catalyses the reaction (12S)-hydroperoxy-(5Z,8Z,10E,14Z)-eicosatetraenoate = 12-oxo-(5Z,8Z,10E,14Z)-eicosatetraenoate + H2O. It carries out the reaction (15S)-hydroperoxy-(5Z,8Z,11Z,13E)-eicosatetraenoate = 15-oxo-(5Z,8Z,11Z,13E)-eicosatetraenoate + H2O. The catalysed reaction is (13S)-hydroperoxy-(9Z,11E)-octadecadienoate = 13-oxo-(9Z,11E)-octadecadienoate + H2O. The enzyme catalyses (8S)-hydroperoxy-(5Z,9E,11Z,14Z)-eicosatetraenoate = (10R)-hydroxy-(8S,9S)-epoxy-(5Z,11Z,14Z)-eicosatrienoate. It catalyses the reaction (8R)-hydroperoxy-(5Z,9E,11Z,14Z)-eicosatetraenoate = 8-oxo-(5Z,9E,11Z,14Z)-eicosatetraenoate + H2O. It carries out the reaction (8S)-hydroperoxy-(5Z,9E,11Z,14Z)-eicosatetraenoate = 8-oxo-(5Z,9E,11Z,14Z)-eicosatetraenoate + H2O. The protein operates within lipid metabolism; hydroperoxy eicosatetraenoic acid biosynthesis. It participates in lipid metabolism; sphingolipid metabolism. Lipoxygenase activity is activated by 13(S)-HPODE leading to an active free ferric enzyme. The lipoxygenase and hydroperoxide isomerase activities are in competition and are reciprocally regulated by oxygen. The oxygen reacts with an epoxyallylic radical intermediate leading to an epoxyallylic peroxyl radical, which, due to its limited reactivity within the enzyme active site, it dissociates and leaves the enzyme in the activated free ferric state. Its function is as follows. Non-heme iron-containing lipoxygenase which is atypical in that it displays a prominent hydroperoxide isomerase activity and a reduced lipoxygenases activity. The hydroperoxide isomerase activity catalyzes the isomerization of hydroperoxides, derived from arachidonic and linoleic acid by ALOX12B, into hepoxilin-type epoxyalcohols and ketones. In presence of oxygen, oxygenates polyunsaturated fatty acids, including arachidonic acid, to produce fatty acid hydroperoxides. In the skin, acts downstream of ALOX12B on the linoleate moiety of esterified omega-hydroxyacyl-sphingosine (EOS) ceramides to produce an epoxy-ketone derivative, a crucial step in the conjugation of omega-hydroxyceramide to membrane proteins. Therefore plays a crucial role in the synthesis of corneocytes lipid envelope and the establishment of the skin barrier to water loss. In parallel, it may have a signaling function in barrier formation through the production of hepoxilins metabolites. Also plays a role in adipocyte differentiation through hepoxilin A3 and hepoxilin B3 production which in turn activate PPARG. Through the production of hepoxilins in the spinal cord, it may regulate inflammatory tactile allodynia. The polypeptide is Hydroperoxide isomerase ALOXE3 (Homo sapiens (Human)).